We begin with the raw amino-acid sequence, 299 residues long: Ribosomal protein L11 methyltransferase (299 aa).

4 residues coordinate S-adenosyl-L-methionine: Thr-144, Gly-165, Asp-187, and Asn-229.

Belongs to the methyltransferase superfamily. PrmA family.

The protein resides in the cytoplasm. The catalysed reaction is L-lysyl-[protein] + 3 S-adenosyl-L-methionine = N(6),N(6),N(6)-trimethyl-L-lysyl-[protein] + 3 S-adenosyl-L-homocysteine + 3 H(+). Functionally, methylates ribosomal protein L11. The chain is Ribosomal protein L11 methyltransferase from Teredinibacter turnerae (strain ATCC 39867 / T7901).